Consider the following 256-residue polypeptide: ATP synthase peripheral stalk subunit b, mitochondrial (256 aa).

A mitochondrion-targeting transit peptide spans 1-42 (MLSRVVLSAAATAAPCLKNAAVLGPGVLQATRVFHTGQPRLA). Lys-131 is modified (N6-succinyllysine). Lys-139, Lys-154, Lys-162, Lys-221, Lys-233, and Lys-244 each carry N6-acetyllysine.

This sequence belongs to the eukaryotic ATPase B chain family. Component of the ATP synthase complex composed at least of ATP5F1A/subunit alpha, ATP5F1B/subunit beta, ATP5MC1/subunit c (homooctomer), MT-ATP6/subunit a, MT-ATP8/subunit 8, ATP5ME/subunit e, ATP5MF/subunit f, ATP5MG/subunit g, ATP5MK/subunit k, ATP5MJ/subunit j, ATP5F1C/subunit gamma, ATP5F1D/subunit delta, ATP5F1E/subunit epsilon, ATP5PF/subunit F6, ATP5PB/subunit b, ATP5PD/subunit d, ATP5PO/subunit OSCP. ATP synthase complex consists of a soluble F(1) head domain (subunits alpha(3) and beta(3)) - the catalytic core - and a membrane F(0) domain - the membrane proton channel (subunits c, a, 8, e, f, g, k and j). These two domains are linked by a central stalk (subunits gamma, delta, and epsilon) rotating inside the F1 region and a stationary peripheral stalk (subunits F6, b, d, and OSCP).

It is found in the mitochondrion. Its subcellular location is the mitochondrion inner membrane. In terms of biological role, subunit b, of the mitochondrial membrane ATP synthase complex (F(1)F(0) ATP synthase or Complex V) that produces ATP from ADP in the presence of a proton gradient across the membrane which is generated by electron transport complexes of the respiratory chain. ATP synthase complex consist of a soluble F(1) head domain - the catalytic core - and a membrane F(1) domain - the membrane proton channel. These two domains are linked by a central stalk rotating inside the F(1) region and a stationary peripheral stalk. During catalysis, ATP synthesis in the catalytic domain of F(1) is coupled via a rotary mechanism of the central stalk subunits to proton translocation. In vivo, can only synthesize ATP although its ATP hydrolase activity can be activated artificially in vitro. Part of the complex F(0) domain. Part of the complex F(0) domain and the peripheric stalk, which acts as a stator to hold the catalytic alpha(3)beta(3) subcomplex and subunit a/ATP6 static relative to the rotary elements. This is ATP synthase peripheral stalk subunit b, mitochondrial from Rattus norvegicus (Rat).